The sequence spans 175 residues: Ribosome maturation factor RimM (175 aa).

Positions 98–175 (EGEYYWHQLE…EMRVDWDADF (78 aa)) constitute a PRC barrel domain.

The protein belongs to the RimM family. In terms of assembly, binds ribosomal protein uS19.

Its subcellular location is the cytoplasm. In terms of biological role, an accessory protein needed during the final step in the assembly of 30S ribosomal subunit, possibly for assembly of the head region. Essential for efficient processing of 16S rRNA. May be needed both before and after RbfA during the maturation of 16S rRNA. It has affinity for free ribosomal 30S subunits but not for 70S ribosomes. In Pseudomonas aeruginosa (strain UCBPP-PA14), this protein is Ribosome maturation factor RimM.